The following is a 261-amino-acid chain: DNA repair protein RecO (261 aa).

The protein belongs to the RecO family.

Functionally, involved in DNA repair and RecF pathway recombination. The protein is DNA repair protein RecO of Limosilactobacillus reuteri (strain DSM 20016) (Lactobacillus reuteri).